We begin with the raw amino-acid sequence, 256 residues long: Thiazole synthase (256 aa).

The active-site Schiff-base intermediate with DXP is Lys-95. 1-deoxy-D-xylulose 5-phosphate contacts are provided by residues Gly-156, Ala-182–Gly-183, and Asn-204–Thr-205.

Belongs to the ThiG family. Homotetramer. Forms heterodimers with either ThiH or ThiS.

Its subcellular location is the cytoplasm. It catalyses the reaction [ThiS sulfur-carrier protein]-C-terminal-Gly-aminoethanethioate + 2-iminoacetate + 1-deoxy-D-xylulose 5-phosphate = [ThiS sulfur-carrier protein]-C-terminal Gly-Gly + 2-[(2R,5Z)-2-carboxy-4-methylthiazol-5(2H)-ylidene]ethyl phosphate + 2 H2O + H(+). Its pathway is cofactor biosynthesis; thiamine diphosphate biosynthesis. In terms of biological role, catalyzes the rearrangement of 1-deoxy-D-xylulose 5-phosphate (DXP) to produce the thiazole phosphate moiety of thiamine. Sulfur is provided by the thiocarboxylate moiety of the carrier protein ThiS. In vitro, sulfur can be provided by H(2)S. The sequence is that of Thiazole synthase from Enterobacter sp. (strain 638).